A 423-amino-acid chain; its full sequence is Glutamate-1-semialdehyde 2,1-aminomutase (423 aa).

Residue K258 is modified to N6-(pyridoxal phosphate)lysine.

This sequence belongs to the class-III pyridoxal-phosphate-dependent aminotransferase family. HemL subfamily. Pyridoxal 5'-phosphate serves as cofactor.

Its subcellular location is the cytoplasm. It carries out the reaction (S)-4-amino-5-oxopentanoate = 5-aminolevulinate. It participates in porphyrin-containing compound metabolism; protoporphyrin-IX biosynthesis; 5-aminolevulinate from L-glutamyl-tRNA(Glu): step 2/2. The polypeptide is Glutamate-1-semialdehyde 2,1-aminomutase (Pyrobaculum aerophilum (strain ATCC 51768 / DSM 7523 / JCM 9630 / CIP 104966 / NBRC 100827 / IM2)).